The chain runs to 166 residues: Small ribosomal subunit protein uS5 (166 aa).

In terms of domain architecture, S5 DRBM spans 11 to 74; sequence LNEKLIAVNR…EKARRNMFTI (64 aa).

Belongs to the universal ribosomal protein uS5 family. As to quaternary structure, part of the 30S ribosomal subunit. Contacts proteins S4 and S8.

With S4 and S12 plays an important role in translational accuracy. Functionally, located at the back of the 30S subunit body where it stabilizes the conformation of the head with respect to the body. This is Small ribosomal subunit protein uS5 from Aliivibrio salmonicida (strain LFI1238) (Vibrio salmonicida (strain LFI1238)).